Reading from the N-terminus, the 266-residue chain is Interleukin-1 beta (266 aa).

Positions 1–113 (MATVPEPTNE…ETYDDDLLCD (113 aa)) are excised as a propeptide.

Belongs to the IL-1 family. In terms of assembly, monomer. In its precursor form, weakly interacts with full-length MEFV; the mature cytokine does not interact at all. Interacts with integrins ITGAV:ITGBV and ITGA5:ITGB1; integrin-binding is required for IL1B signaling. Interacts with cargo receptor TMED10; the interaction is direct and is required for the secretion of IL1B mature form. Interacts with HSP90AB1; the interaction facilitates cargo translocation into the ERGIC. Interacts with HSP90B1; the interaction facilitates cargo translocation into the ERGIC.

It is found in the cytoplasm. Its subcellular location is the cytosol. The protein resides in the secreted. The protein localises to the lysosome. It localises to the extracellular exosome. Its function is as follows. Potent pro-inflammatory cytokine. Initially discovered as the major endogenous pyrogen, induces prostaglandin synthesis, neutrophil influx and activation, T-cell activation and cytokine production, B-cell activation and antibody production, and fibroblast proliferation and collagen production. Promotes Th17 differentiation of T-cells. Synergizes with IL12/interleukin-12 to induce IFNG synthesis from T-helper 1 (Th1) cells. Plays a role in angiogenesis by inducing VEGF production synergistically with TNF and IL6. Involved in transduction of inflammation downstream of pyroptosis: its mature form is specifically released in the extracellular milieu by passing through the gasdermin-D (GSDMD) pore. The sequence is that of Interleukin-1 beta (IL1B) from Delphinapterus leucas (Beluga whale).